We begin with the raw amino-acid sequence, 252 residues long: uncharacterized protein (252 aa).

It belongs to the methyltransferase superfamily.

This is an uncharacterized protein from Mycobacterium sp. (strain JLS).